Consider the following 241-residue polypeptide: Orotidine 5'-phosphate decarboxylase (241 aa).

Residues Asp15, Lys37, 64 to 73 (DLKYHDIPNT), Thr126, Arg187, Gln196, Gly216, and Arg217 contribute to the substrate site. Catalysis depends on Lys66, which acts as the Proton donor.

The protein belongs to the OMP decarboxylase family. Type 1 subfamily. As to quaternary structure, homodimer.

It catalyses the reaction orotidine 5'-phosphate + H(+) = UMP + CO2. The protein operates within pyrimidine metabolism; UMP biosynthesis via de novo pathway; UMP from orotate: step 2/2. In terms of biological role, catalyzes the decarboxylation of orotidine 5'-monophosphate (OMP) to uridine 5'-monophosphate (UMP). This chain is Orotidine 5'-phosphate decarboxylase, found in Geotalea uraniireducens (strain Rf4) (Geobacter uraniireducens).